The sequence spans 205 residues: ATP-dependent Clp protease proteolytic subunit (205 aa).

S101 serves as the catalytic Nucleophile. Residue H126 is part of the active site.

Belongs to the peptidase S14 family. In terms of assembly, component of the chloroplastic Clp protease core complex.

It is found in the plastid. Its subcellular location is the chloroplast stroma. It carries out the reaction Hydrolysis of proteins to small peptides in the presence of ATP and magnesium. alpha-casein is the usual test substrate. In the absence of ATP, only oligopeptides shorter than five residues are hydrolyzed (such as succinyl-Leu-Tyr-|-NHMec, and Leu-Tyr-Leu-|-Tyr-Trp, in which cleavage of the -Tyr-|-Leu- and -Tyr-|-Trp bonds also occurs).. Cleaves peptides in various proteins in a process that requires ATP hydrolysis. Has a chymotrypsin-like activity. Plays a major role in the degradation of misfolded proteins. The polypeptide is ATP-dependent Clp protease proteolytic subunit (Pinus contorta (Shore pine)).